A 166-amino-acid chain; its full sequence is Myeloid-derived growth factor (166 aa).

Residues 1–24 form the signal peptide; sequence MAAPSGGFWTAVVLAAAALKLAAA.

Belongs to the MYDGF family. In terms of tissue distribution, expressed in prostate, spleen and lung, and weakly expressed in the left ventricle (LF) and liver. Expressed predominantly in inflammatory cells, such as monocytes and macrophages, and weakly expressed in neutrophils, T-cells, B-cells, endothelial cells and cardiac myocytes, after myocardial infarction (MI) (at protein level).

It is found in the secreted. It localises to the endoplasmic reticulum-Golgi intermediate compartment. Its subcellular location is the endoplasmic reticulum. The protein localises to the golgi apparatus. Its function is as follows. Bone marrow-derived monocyte and paracrine-acting protein that promotes cardiac myocyte survival and adaptive angiogenesis for cardiac protection and/or repair after myocardial infarction (MI). Stimulates endothelial cell proliferation through a MAPK1/3-, STAT3- and CCND1-mediated signaling pathway. Inhibits cardiac myocyte apoptosis in a PI3K/AKT-dependent signaling pathway. In Mus musculus (Mouse), this protein is Myeloid-derived growth factor.